The sequence spans 89 residues: Small ribosomal subunit protein uS15 (89 aa).

Residues 1-22 (MPLSKEQKQEVMEKYKLHEHDT) form a disordered region.

The protein belongs to the universal ribosomal protein uS15 family. As to quaternary structure, part of the 30S ribosomal subunit. Forms a bridge to the 50S subunit in the 70S ribosome, contacting the 23S rRNA.

In terms of biological role, one of the primary rRNA binding proteins, it binds directly to 16S rRNA where it helps nucleate assembly of the platform of the 30S subunit by binding and bridging several RNA helices of the 16S rRNA. Functionally, forms an intersubunit bridge (bridge B4) with the 23S rRNA of the 50S subunit in the ribosome. This chain is Small ribosomal subunit protein uS15, found in Natranaerobius thermophilus (strain ATCC BAA-1301 / DSM 18059 / JW/NM-WN-LF).